Here is a 176-residue protein sequence, read N- to C-terminus: Ribosome maturation factor RimM (176 aa).

Residues 100-173 (KDEYHYHDLI…WLLINPPPGL (74 aa)) enclose the PRC barrel domain.

This sequence belongs to the RimM family. In terms of assembly, binds ribosomal protein uS19.

The protein resides in the cytoplasm. Its function is as follows. An accessory protein needed during the final step in the assembly of 30S ribosomal subunit, possibly for assembly of the head region. Essential for efficient processing of 16S rRNA. May be needed both before and after RbfA during the maturation of 16S rRNA. It has affinity for free ribosomal 30S subunits but not for 70S ribosomes. This is Ribosome maturation factor RimM from Prochlorococcus marinus (strain NATL1A).